A 596-amino-acid polypeptide reads, in one-letter code: Elongation factor 4 (596 aa).

One can recognise a tr-type G domain in the interval 2-183; sequence KNIRNFSIIA…AIITRIPAPN (182 aa). GTP contacts are provided by residues 14 to 19 and 130 to 133; these read DHGKST and NKID.

Belongs to the TRAFAC class translation factor GTPase superfamily. Classic translation factor GTPase family. LepA subfamily.

It localises to the cell inner membrane. The catalysed reaction is GTP + H2O = GDP + phosphate + H(+). Required for accurate and efficient protein synthesis under certain stress conditions. May act as a fidelity factor of the translation reaction, by catalyzing a one-codon backward translocation of tRNAs on improperly translocated ribosomes. Back-translocation proceeds from a post-translocation (POST) complex to a pre-translocation (PRE) complex, thus giving elongation factor G a second chance to translocate the tRNAs correctly. Binds to ribosomes in a GTP-dependent manner. This is Elongation factor 4 from Campylobacter concisus (strain 13826).